A 75-amino-acid chain; its full sequence is Small ribosomal subunit protein bS18 (75 aa).

Belongs to the bacterial ribosomal protein bS18 family. In terms of assembly, part of the 30S ribosomal subunit. Forms a tight heterodimer with protein bS6.

Functionally, binds as a heterodimer with protein bS6 to the central domain of the 16S rRNA, where it helps stabilize the platform of the 30S subunit. This chain is Small ribosomal subunit protein bS18, found in Pectobacterium atrosepticum (strain SCRI 1043 / ATCC BAA-672) (Erwinia carotovora subsp. atroseptica).